The sequence spans 261 residues: Maspardin (261 aa).

Residues 87–159 form the AB hydrolase-1 domain; that stretch reads FCDGFRKLLD…NSFWLMPAFM (73 aa). S257 bears the Phosphoserine mark.

Belongs to the AB hydrolase superfamily. As to quaternary structure, interacts with CD4. Interacts with ALDH16A1.

It localises to the cytoplasm. Functionally, may play a role as a negative regulatory factor in CD4-dependent T-cell activation. In Rattus norvegicus (Rat), this protein is Maspardin (Spg21).